Reading from the N-terminus, the 297-residue chain is N-acetylmuramic acid 6-phosphate etherase (297 aa).

The SIS domain maps to 55–218 (ITKHFKQGGR…STGAMVGIGK (164 aa)). Residue E83 is the Proton donor of the active site. E114 is a catalytic residue.

Belongs to the GCKR-like family. MurNAc-6-P etherase subfamily. Homodimer.

The catalysed reaction is N-acetyl-D-muramate 6-phosphate + H2O = N-acetyl-D-glucosamine 6-phosphate + (R)-lactate. Its pathway is amino-sugar metabolism; N-acetylmuramate degradation. Specifically catalyzes the cleavage of the D-lactyl ether substituent of MurNAc 6-phosphate, producing GlcNAc 6-phosphate and D-lactate. The sequence is that of N-acetylmuramic acid 6-phosphate etherase from Oenococcus oeni (strain ATCC BAA-331 / PSU-1).